The sequence spans 375 residues: 23S rRNA (uracil(747)-C(5))-methyltransferase RlmC (375 aa).

[4Fe-4S] cluster is bound by residues cysteine 3, cysteine 11, cysteine 14, and cysteine 87. Residues glutamine 212, phenylalanine 241, glutamate 262, and asparagine 307 each contribute to the S-adenosyl-L-methionine site. Residue cysteine 334 is the Nucleophile of the active site.

This sequence belongs to the class I-like SAM-binding methyltransferase superfamily. RNA M5U methyltransferase family. RlmC subfamily.

It catalyses the reaction uridine(747) in 23S rRNA + S-adenosyl-L-methionine = 5-methyluridine(747) in 23S rRNA + S-adenosyl-L-homocysteine + H(+). Catalyzes the formation of 5-methyl-uridine at position 747 (m5U747) in 23S rRNA. The polypeptide is 23S rRNA (uracil(747)-C(5))-methyltransferase RlmC (Salmonella dublin (strain CT_02021853)).